Consider the following 619-residue polypeptide: Dihydroxy-acid dehydratase (619 aa).

Asp81 serves as a coordination point for Mg(2+). Cys122 lines the [2Fe-2S] cluster pocket. Mg(2+)-binding residues include Asp123 and Lys124. Lys124 carries the N6-carboxylysine modification. Cys195 provides a ligand contact to [2Fe-2S] cluster. Glu494 contributes to the Mg(2+) binding site. Ser520 (proton acceptor) is an active-site residue.

Belongs to the IlvD/Edd family. Homodimer. The cofactor is [2Fe-2S] cluster. Mg(2+) is required as a cofactor.

It carries out the reaction (2R)-2,3-dihydroxy-3-methylbutanoate = 3-methyl-2-oxobutanoate + H2O. It catalyses the reaction (2R,3R)-2,3-dihydroxy-3-methylpentanoate = (S)-3-methyl-2-oxopentanoate + H2O. It participates in amino-acid biosynthesis; L-isoleucine biosynthesis; L-isoleucine from 2-oxobutanoate: step 3/4. The protein operates within amino-acid biosynthesis; L-valine biosynthesis; L-valine from pyruvate: step 3/4. Functionally, functions in the biosynthesis of branched-chain amino acids. Catalyzes the dehydration of (2R,3R)-2,3-dihydroxy-3-methylpentanoate (2,3-dihydroxy-3-methylvalerate) into 2-oxo-3-methylpentanoate (2-oxo-3-methylvalerate) and of (2R)-2,3-dihydroxy-3-methylbutanoate (2,3-dihydroxyisovalerate) into 2-oxo-3-methylbutanoate (2-oxoisovalerate), the penultimate precursor to L-isoleucine and L-valine, respectively. This is Dihydroxy-acid dehydratase from Shewanella oneidensis (strain ATCC 700550 / JCM 31522 / CIP 106686 / LMG 19005 / NCIMB 14063 / MR-1).